The chain runs to 607 residues: Palmitoyltransferase erf2 (607 aa).

Disordered stretches follow at residues 1–198 (MSSA…SAKL) and 217–272 (ANHN…HHAP). Over 1-305 (MSSAPETSDA…FQNSRDKPIN (305 aa)) the chain is Cytoplasmic. Positions 53–66 (SSRPPQSQRSLSRR) are enriched in low complexity. Composition is skewed to polar residues over residues 73 to 102 (SSIT…SLTA), 125 to 156 (ETAT…SSAP), 176 to 192 (RNTS…SRSV), and 227 to 242 (SQRS…NGNT). Positions 245–256 (EPRDNRAHERLS) are enriched in basic and acidic residues. The segment covering 257 to 272 (SADSSPGSIQKQHHAP) has biased composition (polar residues). Residues 306 to 326 (IATGIFVVLPSALFFAYSAPW) traverse the membrane as a helical segment. Topologically, residues 327 to 330 (LWHH) are lumenal. A helical transmembrane segment spans residues 331-351 (ISPAVPILFAYLFYICFSSFI). At 352-449 (HASVVDPGII…NCVGRRNYRY (98 aa)) the chain is on the cytoplasmic side. One can recognise a DHHC domain in the interval 405–455 (KYCKTCNIWRPPRCYHCRVCDNCVETLDHHCVWLNNCVGRRNYRYFFAFVS). Catalysis depends on Cys435, which acts as the S-palmitoyl cysteine intermediate. A helical transmembrane segment spans residues 450–470 (FFAFVSSATLLALFLLGASLA). The Lumenal portion of the chain corresponds to 471-497 (HVLVYRAREGVSFGSAIDKWRVPWAMV). A helical membrane pass occupies residues 498–518 (IYGALAAPYPASLWAYHLFLI). Topologically, residues 519–607 (GRGETTREYL…QHVPPTPRQG (89 aa)) are cytoplasmic. The interval 570 to 607 (YQEGDQRLSAMKRKDRPRDVEAQADIEMQHVPPTPRQG) is disordered.

Belongs to the DHHC palmitoyltransferase family. ERF2/ZDHHC9 subfamily. In terms of processing, autopalmitoylated.

It localises to the endoplasmic reticulum membrane. The catalysed reaction is L-cysteinyl-[protein] + hexadecanoyl-CoA = S-hexadecanoyl-L-cysteinyl-[protein] + CoA. Its function is as follows. Palmitoyltransferase specific for Ras proteins. This Aspergillus fumigatus (strain ATCC MYA-4609 / CBS 101355 / FGSC A1100 / Af293) (Neosartorya fumigata) protein is Palmitoyltransferase erf2 (erf2).